The sequence spans 461 residues: Zinc transporter 6 (461 aa).

The Cytoplasmic segment spans residues 1–33; the sequence is MGTIHLFRKPQRSFFGKLLQEFRLVAADRRSWK. Residues 34 to 54 form a helical membrane-spanning segment; the sequence is ILLFGAINLTCTGFLLMWCSS. Residues 55–64 lie on the Extracellular side of the membrane; sequence TNSIALTAYT. The helical transmembrane segment at 65-85 threads the bilayer; that stretch reads YLTIFDLFSLITCLVSYWVMM. The Cytoplasmic portion of the chain corresponds to 86 to 98; the sequence is RKPSPAYSFGFER. A helical membrane pass occupies residues 99 to 119; sequence LEVLAVFASTVLAQLGALFIL. At 120–134 the chain is on the extracellular side; the sequence is KESAERFLEQPEIHT. A helical transmembrane segment spans residues 135-155; the sequence is GRLLVGTFVALSFNLFTMLSI. The Cytoplasmic portion of the chain corresponds to 156–200; sequence RNKPFAYVSEAASTSWLQEHVADLSRSLCGIIPGLSSIFLPRMNP. A helical transmembrane segment spans residues 201-221; the sequence is FVLIDLAGAFALCITYMLIEI. The Extracellular segment spans residues 222-223; the sequence is NN. The chain crosses the membrane as a helical span at residues 224-244; the sequence is YFAVDTASAIAIALMTFGTMY. Over 245 to 461 the chain is Cytoplasmic; the sequence is PMSVYSGKVL…TNNRIGQPRP (217 aa). The interval 362–393 is disordered; that stretch reads PPLKGTDDSNPVTSTPTKPSSPPPEFSFNTPG. A compositionally biased stretch (low complexity) spans 370 to 379; it reads SNPVTSTPTK.

The protein belongs to the cation diffusion facilitator (CDF) transporter (TC 2.A.4) family. SLC30A subfamily. As to quaternary structure, heterodimer with SLC30A5; form a functional zinc ion transmembrane transporter.

The protein resides in the golgi apparatus. Its subcellular location is the trans-Golgi network membrane. Functionally, has probably no intrinsic transporter activity but together with SLC30A5 forms a functional zinc ion:proton antiporter heterodimer, mediating zinc entry into the lumen of organelles along the secretory pathway. As part of that zinc ion:proton antiporter, contributes to zinc ion homeostasis within the early secretory pathway and regulates the activation and folding of enzymes like alkaline phosphatases and enzymes involved in phosphatidylinositol glycan anchor biosynthesis. The protein is Zinc transporter 6 (SLC30A6) of Bos taurus (Bovine).